Consider the following 251-residue polypeptide: Triosephosphate isomerase (251 aa).

A substrate-binding site is contributed by 9-11; sequence NWK. The active-site Electrophile is His-95. Glu-167 serves as the catalytic Proton acceptor. Substrate is bound by residues Gly-173, Ser-212, and 233 to 234; that span reads GG.

Belongs to the triosephosphate isomerase family. Homodimer.

The protein localises to the cytoplasm. It carries out the reaction D-glyceraldehyde 3-phosphate = dihydroxyacetone phosphate. It participates in carbohydrate biosynthesis; gluconeogenesis. It functions in the pathway carbohydrate degradation; glycolysis; D-glyceraldehyde 3-phosphate from glycerone phosphate: step 1/1. Its function is as follows. Involved in the gluconeogenesis. Catalyzes stereospecifically the conversion of dihydroxyacetone phosphate (DHAP) to D-glyceraldehyde-3-phosphate (G3P). The protein is Triosephosphate isomerase of Pseudomonas fluorescens (strain ATCC BAA-477 / NRRL B-23932 / Pf-5).